Consider the following 511-residue polypeptide: Maturase K (511 aa).

It belongs to the intron maturase 2 family. MatK subfamily.

The protein localises to the plastid. The protein resides in the chloroplast. In terms of biological role, usually encoded in the trnK tRNA gene intron. Probably assists in splicing its own and other chloroplast group II introns. The polypeptide is Maturase K (Bromelia plumieri (Karatas)).